Reading from the N-terminus, the 436-residue chain is Enolase (436 aa).

Substrate contacts are provided by H159 and E168. E211 serves as the catalytic Proton donor. 3 residues coordinate Mg(2+): D246, E295, and D322. The substrate site is built by E295 and D322. Residue K347 is the Proton acceptor of the active site. Residues 374 to 377 (SHRS) and K398 contribute to the substrate site.

Belongs to the enolase family. Homodimer. Mg(2+) serves as cofactor.

Its subcellular location is the cytoplasm. It catalyses the reaction (2R)-2-phosphoglycerate = phosphoenolpyruvate + H2O. The protein operates within carbohydrate degradation; glycolysis; pyruvate from D-glyceraldehyde 3-phosphate: step 4/5. The protein is Enolase of Neocallimastix frontalis (Rumen fungus).